Reading from the N-terminus, the 457-residue chain is D-inositol 3-phosphate glycosyltransferase (457 aa).

Residue H34 participates in 1D-myo-inositol 3-phosphate binding. UDP-N-acetyl-alpha-D-glucosamine-binding positions include 40–41 (QP) and G48. 1D-myo-inositol 3-phosphate contacts are provided by residues 45–50 (DAGGMN), K103, Y136, T160, and R180. Positions 267, 272, and 333 each coordinate UDP-N-acetyl-alpha-D-glucosamine. Mg(2+) contacts are provided by F342, R343, and A345. Positions 355 and 363 each coordinate UDP-N-acetyl-alpha-D-glucosamine. A Mg(2+)-binding site is contributed by T369.

Belongs to the glycosyltransferase group 1 family. MshA subfamily. In terms of assembly, homodimer.

The enzyme catalyses 1D-myo-inositol 3-phosphate + UDP-N-acetyl-alpha-D-glucosamine = 1D-myo-inositol 2-acetamido-2-deoxy-alpha-D-glucopyranoside 3-phosphate + UDP + H(+). Catalyzes the transfer of a N-acetyl-glucosamine moiety to 1D-myo-inositol 3-phosphate to produce 1D-myo-inositol 2-acetamido-2-deoxy-glucopyranoside 3-phosphate in the mycothiol biosynthesis pathway. This Streptomyces coelicolor (strain ATCC BAA-471 / A3(2) / M145) protein is D-inositol 3-phosphate glycosyltransferase.